The following is a 507-amino-acid chain: Glycerol kinase 1 (507 aa).

An ADP-binding site is contributed by threonine 12. Residues threonine 12, threonine 13, and serine 14 each coordinate ATP. Threonine 12 lines the sn-glycerol 3-phosphate pocket. Arginine 16 lines the ADP pocket. Sn-glycerol 3-phosphate contacts are provided by arginine 82, glutamate 83, tyrosine 134, and aspartate 249. Residues arginine 82, glutamate 83, tyrosine 134, aspartate 249, and glutamine 250 each coordinate glycerol. Residues threonine 271 and glycine 315 each coordinate ADP. The ATP site is built by threonine 271, glycine 315, glutamine 319, and glycine 416. Residues glycine 416 and asparagine 420 each contribute to the ADP site.

The protein belongs to the FGGY kinase family.

It catalyses the reaction glycerol + ATP = sn-glycerol 3-phosphate + ADP + H(+). It participates in polyol metabolism; glycerol degradation via glycerol kinase pathway; sn-glycerol 3-phosphate from glycerol: step 1/1. Its activity is regulated as follows. Inhibited by fructose 1,6-bisphosphate (FBP). In terms of biological role, key enzyme in the regulation of glycerol uptake and metabolism. Catalyzes the phosphorylation of glycerol to yield sn-glycerol 3-phosphate. The chain is Glycerol kinase 1 from Streptomyces coelicolor (strain ATCC BAA-471 / A3(2) / M145).